A 358-amino-acid polypeptide reads, in one-letter code: UDP-N-acetylglucosamine--N-acetylmuramyl-(pentapeptide) pyrophosphoryl-undecaprenol N-acetylglucosamine transferase (358 aa).

UDP-N-acetyl-alpha-D-glucosamine contacts are provided by residues 11–13 (TGG), asparagine 120, arginine 161, serine 188, and glutamine 282.

Belongs to the glycosyltransferase 28 family. MurG subfamily.

It is found in the cell inner membrane. The enzyme catalyses di-trans,octa-cis-undecaprenyl diphospho-N-acetyl-alpha-D-muramoyl-L-alanyl-D-glutamyl-meso-2,6-diaminopimeloyl-D-alanyl-D-alanine + UDP-N-acetyl-alpha-D-glucosamine = di-trans,octa-cis-undecaprenyl diphospho-[N-acetyl-alpha-D-glucosaminyl-(1-&gt;4)]-N-acetyl-alpha-D-muramoyl-L-alanyl-D-glutamyl-meso-2,6-diaminopimeloyl-D-alanyl-D-alanine + UDP + H(+). Its pathway is cell wall biogenesis; peptidoglycan biosynthesis. In terms of biological role, cell wall formation. Catalyzes the transfer of a GlcNAc subunit on undecaprenyl-pyrophosphoryl-MurNAc-pentapeptide (lipid intermediate I) to form undecaprenyl-pyrophosphoryl-MurNAc-(pentapeptide)GlcNAc (lipid intermediate II). The protein is UDP-N-acetylglucosamine--N-acetylmuramyl-(pentapeptide) pyrophosphoryl-undecaprenol N-acetylglucosamine transferase of Synechococcus sp. (strain CC9902).